A 299-amino-acid polypeptide reads, in one-letter code: Centriolar and ciliogenesis-associated protein HYLS1 (299 aa).

Phosphoserine is present on S179.

It belongs to the HYLS1 family.

The protein localises to the cytoplasm. Its subcellular location is the cell projection. It is found in the cilium. The protein resides in the cytoskeleton. It localises to the microtubule organizing center. The protein localises to the centrosome. Its subcellular location is the centriole. Its function is as follows. Plays a role in ciliogenesis. This chain is Centriolar and ciliogenesis-associated protein HYLS1, found in Homo sapiens (Human).